Here is a 92-residue protein sequence, read N- to C-terminus: Small ribosomal subunit protein uS19c (92 aa).

The protein belongs to the universal ribosomal protein uS19 family.

The protein resides in the plastid. It localises to the chloroplast. In terms of biological role, protein S19 forms a complex with S13 that binds strongly to the 16S ribosomal RNA. The protein is Small ribosomal subunit protein uS19c of Lactuca sativa (Garden lettuce).